Reading from the N-terminus, the 560-residue chain is Protein yellow (560 aa).

The first 30 residues, 1–30 (MHVQDKGGIGALTALSLLLVAVTMVTPTQA), serve as a signal peptide directing secretion. Asn153 and Asn224 each carry an N-linked (GlcNAc...) asparagine glycan. Residues 452-492 (QYRPVLPQKPQTSWGPSPPSRSYLPSLGASPGGPGQVVSSV) are disordered. A compositionally biased stretch (low complexity) spans 471-480 (SRSYLPSLGA).

This sequence belongs to the major royal jelly protein family.

It localises to the secreted. Its function is as follows. Controls the pigmentation pattern of the adult cuticle and larval mouth parts. In Drosophila pseudoobscura pseudoobscura (Fruit fly), this protein is Protein yellow (y).